The chain runs to 397 residues: CCA-adding enzyme (397 aa).

Residues Gly-27 and Arg-30 each contribute to the ATP site. Gly-27 and Arg-30 together coordinate CTP. 2 residues coordinate Mg(2+): Asp-40 and Asp-42. The ATP site is built by Arg-111, Asp-154, Arg-157, Arg-160, and Arg-163. CTP contacts are provided by Arg-111, Asp-154, Arg-157, Arg-160, and Arg-163.

This sequence belongs to the tRNA nucleotidyltransferase/poly(A) polymerase family. Bacterial CCA-adding enzyme type 3 subfamily. Homodimer. It depends on Mg(2+) as a cofactor.

The enzyme catalyses a tRNA precursor + 2 CTP + ATP = a tRNA with a 3' CCA end + 3 diphosphate. It carries out the reaction a tRNA with a 3' CCA end + 2 CTP + ATP = a tRNA with a 3' CCACCA end + 3 diphosphate. In terms of biological role, catalyzes the addition and repair of the essential 3'-terminal CCA sequence in tRNAs without using a nucleic acid template. Adds these three nucleotides in the order of C, C, and A to the tRNA nucleotide-73, using CTP and ATP as substrates and producing inorganic pyrophosphate. tRNA 3'-terminal CCA addition is required both for tRNA processing and repair. Also involved in tRNA surveillance by mediating tandem CCA addition to generate a CCACCA at the 3' terminus of unstable tRNAs. While stable tRNAs receive only 3'-terminal CCA, unstable tRNAs are marked with CCACCA and rapidly degraded. This is CCA-adding enzyme from Anoxybacillus flavithermus (strain DSM 21510 / WK1).